Reading from the N-terminus, the 247-residue chain is MASSDERPGAYPARDGSENLPPGDPKTMKTVVMDKGAAMMQSLKPIKQMSLHLCSFACYGHDPSRQIEVNFYVHRLNQDFLQCAVYDCDSSKPHLIGIEYIVSERLFESLDPEEQKLWHSHDYEIQTGLLVTPRVPELVAKTELENIAKTYGKFWCTWQTDRGDKLPLGAPSLMMSPQDVNMGKIKPGLLKKRDDEYGISTESLKTSRVGIMGPEKKNSMADYWVHHGKGLAVDIIETEMQKLAPFP.

Positions 1 to 26 (MASSDERPGAYPARDGSENLPPGDPK) are disordered.

The protein belongs to the OBAP family.

This Arabidopsis thaliana (Mouse-ear cress) protein is Oil body-associated protein 2A.